Reading from the N-terminus, the 337-residue chain is tRNA N6-adenosine threonylcarbamoyltransferase (337 aa).

Positions 111 and 115 each coordinate Fe cation. Substrate-binding positions include 134–138, aspartate 167, glycine 180, and asparagine 272; that span reads LVSGG. Aspartate 300 serves as a coordination point for Fe cation.

The protein belongs to the KAE1 / TsaD family. It depends on Fe(2+) as a cofactor.

It localises to the cytoplasm. It carries out the reaction L-threonylcarbamoyladenylate + adenosine(37) in tRNA = N(6)-L-threonylcarbamoyladenosine(37) in tRNA + AMP + H(+). Functionally, required for the formation of a threonylcarbamoyl group on adenosine at position 37 (t(6)A37) in tRNAs that read codons beginning with adenine. Is involved in the transfer of the threonylcarbamoyl moiety of threonylcarbamoyl-AMP (TC-AMP) to the N6 group of A37, together with TsaE and TsaB. TsaD likely plays a direct catalytic role in this reaction. The chain is tRNA N6-adenosine threonylcarbamoyltransferase from Photorhabdus laumondii subsp. laumondii (strain DSM 15139 / CIP 105565 / TT01) (Photorhabdus luminescens subsp. laumondii).